A 344-amino-acid chain; its full sequence is Type VI secretion system component TssA1 (344 aa).

As to quaternary structure, homododecamer. Interacts with TssB1 and TssC1. Interacts with TssK1 and TssF1.

Its function is as follows. Core component of the H1 type VI (H1-T6SS) secretion system that plays a role in the release of toxins targeting both eukaryotic and prokaryotic species. Forms a dodecameric ring-shaped structure located at one end of the T6SS sheath. May properly attach the pre-assembled sheath onto the baseplate and/or stabilize the sheaths tubular structure. The chain is Type VI secretion system component TssA1 from Pseudomonas aeruginosa (strain ATCC 15692 / DSM 22644 / CIP 104116 / JCM 14847 / LMG 12228 / 1C / PRS 101 / PAO1).